The chain runs to 171 residues: MPLLDSFTVDHTRMEAPAVRVAKTMNTPHGDTITVFDLRFCIPNKEVMPEKGIHTLEHLFAGFMRNHLNGNGVEIIDISPMGCRTGFYMSLIGTPDEQRVADAWKAAMADVLKVKEQNQIPELNVYQCGTYQMHSLSEAQDIARHILEHDVRINSNEELALPKDKLQELHI.

Fe cation-binding residues include histidine 54, histidine 58, and cysteine 128.

The protein belongs to the LuxS family. As to quaternary structure, homodimer. Fe cation is required as a cofactor.

It catalyses the reaction S-(5-deoxy-D-ribos-5-yl)-L-homocysteine = (S)-4,5-dihydroxypentane-2,3-dione + L-homocysteine. Its function is as follows. Involved in the synthesis of autoinducer 2 (AI-2) which is secreted by bacteria and is used to communicate both the cell density and the metabolic potential of the environment. The regulation of gene expression in response to changes in cell density is called quorum sensing. Catalyzes the transformation of S-ribosylhomocysteine (RHC) to homocysteine (HC) and 4,5-dihydroxy-2,3-pentadione (DPD). The chain is S-ribosylhomocysteine lyase from Citrobacter koseri (strain ATCC BAA-895 / CDC 4225-83 / SGSC4696).